We begin with the raw amino-acid sequence, 356 residues long: Nicotinate-nucleotide--dimethylbenzimidazole phosphoribosyltransferase (356 aa).

Residue glutamate 317 is the Proton acceptor of the active site.

The protein belongs to the CobT family. As to quaternary structure, homodimer.

It carries out the reaction 5,6-dimethylbenzimidazole + nicotinate beta-D-ribonucleotide = alpha-ribazole 5'-phosphate + nicotinate + H(+). The protein operates within nucleoside biosynthesis; alpha-ribazole biosynthesis; alpha-ribazole from 5,6-dimethylbenzimidazole: step 1/2. Functionally, catalyzes the synthesis of alpha-ribazole-5'-phosphate from nicotinate mononucleotide (NAMN) and 5,6-dimethylbenzimidazole (DMB). This Salmonella schwarzengrund (strain CVM19633) protein is Nicotinate-nucleotide--dimethylbenzimidazole phosphoribosyltransferase.